Reading from the N-terminus, the 1260-residue chain is Paraclostridial mosquitocidal protein 1 (1260 aa).

Zn(2+) is bound at residue histidine 208. The Proton acceptor role is filled by glutamate 209. Residues histidine 212 and glutamate 248 each coordinate Zn(2+). The cysteines at positions 395 and 406 are disulfide-linked. The translocation domain (TD) stretch occupies residues 401–824 (NRVNICIDVN…NIQSIPDFDI (424 aa)). The tract at residues 825 to 1065 (NALIDRLGIQ…SYFNSNILRD (241 aa)) is HCN. The HCC stretch occupies residues 1066-1260 (FWGEPLEYNK…FVSEDEGWKE (195 aa)).

Belongs to the peptidase M27 family. The cofactor is Zn(2+).

The enzyme catalyses Limited hydrolysis of proteins of the neuroexocytosis apparatus, synaptobrevins, SNAP25 or syntaxin. No detected action on small molecule substrates.. Preincubation with the metalloprotease inhibitor 1,10-phenanthroline before injection into Anopheles or Aedes decreases toxicity. Functionally, neurotoxin active against Anopheles but not Aedes mosquitoes upon oral ingestion; expression of the ptox operon (ntnh-orfX1-orfX2-orfX3-pmp1) in B.thuringiensis kills Anopheles but not Aedes mosquito 3rd instar larvae. The ntnh-pmp1 construct is about half as toxic. PMP1 is toxic when injected directly into Anopheles or Aedes mosquito 3rd instar larvae, larvae no longer move, suggesting they are paralyzed. Adult mosquitoes (Anopheles or Aedes) and Drosophila lose the ability to fly in a dose-dependent manner by 24 hours after injection with 100 pg neurotoxin. Not toxic upon injection in mice. Neurotoxin that cleaves A.gambiae syntaxin 1a, probably hydrolyzing the '240-Glu-|-His-241' bond. Does not cleave A.gambiae n-synaptobrevin or SNAP-25, nor human syntaxin 1A. In terms of biological role, responsible for host epithelial cell transcytosis, host nerve cell targeting and translocation of PMP1 light chain (LC) into host cytosol. Composed of 3 subdomains; the translocation domain (TD), and N-terminus and C-terminus of the receptor-binding domain (RBD), called HCN and HCC. The polypeptide is Paraclostridial mosquitocidal protein 1 (Paraclostridium bifermentans (Clostridium bifermentans)).